A 2442-amino-acid polypeptide reads, in one-letter code: Histone lysine acetyltransferase CREBBP (2442 aa).

Disordered regions lie at residues Met-1–Leu-40 and Arg-74–Ser-168. Ala-2 carries the N-acetylalanine modification. Residues Pro-20–Phe-30 show a composition bias toward polar residues. Position 120 is a phosphoserine (Ser-120). Positions Gly-125–Ser-168 are enriched in polar residues. The residue at position 219 (Arg-219) is an Omega-N-methylarginine. Residues Pro-226–Ala-409 form an interaction with SRCAP region. The segment covering Gly-261–Thr-272 has biased composition (low complexity). Residues Gly-261–Thr-290 form a disordered region. Residues Ser-273–Gly-284 show a composition bias toward polar residues. The TAZ-type 1 zinc finger occupies Asp-346–Leu-432. The Zn(2+) site is built by His-362, Cys-366, Cys-379, Cys-384, His-393, Cys-397, Cys-403, Cys-408, His-417, Cys-421, Cys-426, and Cys-429. Positions Gly-586–Glu-665 constitute a KIX domain. 2 positions are modified to asymmetric dimethylarginine: Arg-600 and Arg-624. Position 656 is an N6-acetyllysine (Lys-656). Polar residues predominate over residues Phe-792–Gln-825. Positions Phe-792–Lys-1084 are disordered. Composition is skewed to pro residues over residues Pro-846–Ala-862 and Pro-874–Pro-887. Polar residues predominate over residues Val-894–Ser-906. Composition is skewed to low complexity over residues Ser-909–Gln-930 and Pro-938–Pro-957. The span at Pro-974–Pro-989 shows a compositional bias: polar residues. Residue Lys-999 forms a Glycyl lysine isopeptide (Lys-Gly) (interchain with G-Cter in SUMO1) linkage. The span at Ala-1012–Met-1022 shows a compositional bias: basic and acidic residues. At Lys-1015 the chain carries N6-acetyllysine. Position 1031 is a phosphoserine (Ser-1031). A compositionally biased stretch (basic and acidic residues) spans Val-1033 to Ala-1060. Glycyl lysine isopeptide (Lys-Gly) (interchain with G-Cter in SUMO1) cross-links involve residues Lys-1034 and Lys-1057. The segment covering Ser-1067 to Gln-1080 has biased composition (polar residues). Ser-1077 bears the Phosphoserine mark. Residues Phe-1086 to Val-1193 enclose the Bromo domain. Residues Asp-1125–Lys-1171 are interaction with histone. Residues Asn-1163–Lys-1181 are interaction with ASF1A. Lys-1217 carries the post-translational modification N6-acetyllysine. Positions Lys-1324–Gln-1701 constitute a CBP/p300-type HAT domain. Phosphoserine; by IKKA occurs at positions 1383 and 1387. The tract at residues Tyr-1434 to Asp-1436 is interaction with histone. Residues Leu-1435–Ser-1437, Arg-1447–Thr-1448, Ile-1494, Arg-1499, and Trp-1503 contribute to the acetyl-CoA site. Positions Asn-1548–Thr-1575 form a coiled coil. Positions Leu-1557–Ser-1569 are enriched in basic and acidic residues. Positions Leu-1557–Asn-1616 are disordered. Residues Lys-1584, Lys-1592, Lys-1593, Lys-1596, and Lys-1598 each carry the N6-acetyllysine modification. The span at Ala-1586–Lys-1596 shows a compositional bias: basic residues. The ZZ-type zinc finger occupies Arg-1703 to Asp-1751. Cys-1708, Cys-1711, Cys-1721, Cys-1724, Cys-1730, Cys-1733, His-1739, and His-1741 together coordinate Zn(2+). Lys-1742 and Lys-1745 each carry N6-acetyllysine. Phosphoserine is present on Ser-1764. The segment at Gln-1766–Ile-1847 adopts a TAZ-type 2 zinc-finger fold. Residues Thr-1875–Ala-1960 form a disordered region. Composition is skewed to pro residues over residues Pro-1901–Ser-1913 and Pro-1944–Ala-1955. Residues Ser-2064, Ser-2077, and Ser-2080 each carry the phosphoserine modification. Residues Asn-2112–Ser-2421 are disordered. 4 stretches are compositionally biased toward low complexity: residues Gln-2113 to Pro-2138, Gln-2197 to Gln-2217, Met-2261 to Gly-2280, and Ile-2287 to Ile-2305. Composition is skewed to polar residues over residues Ser-2315 to Ala-2327 and Gln-2334 to Val-2343. A compositionally biased stretch (pro residues) spans Val-2349–Ser-2372. Ser-2351 carries the phosphoserine modification. Polar residues predominate over residues Gln-2411–Ser-2421.

As to quaternary structure, part of a complex composed of MSX3, CREBBP/CBP AND EP300/p300; the interaction with MSX3 decreases histone acetylation activity. Found in a complex containing NCOA2; NCOA3; IKKA; IKKB and IKBKG. Probably part of a complex with HIF1A and EP300. Interacts with phosphorylated CREB1. Interacts with the C-terminal region of CITED4. The TAZ-type 1 domain interacts with HIF1A. Interacts with SRCAP, CARM1, ELF3, MLLT7/FOXO4, N4BP2, NCOA1, NCOA3, NCOA6, PCAF, DDX5, DDX17, PELP1, PML, SMAD1, SMAD2, SMAD3, SPIB, TRERF1 and ZCCHC12. Interacts with KLF1; the interaction results in acetylation and enhancement of transcriptional activity of KLF1. Interacts with DAXX; the interaction is dependent on CBP sumoylation and results in suppression of the transcriptional activity via recruitment of HDAC2 to DAXX. Interacts with MAF. Interacts with MTDH. Interacts with MAFG; the interaction acetylates MAFG in the basic region and stimulates NFE2 transcriptional activity through increasing its DNA-binding activity. Interacts with IRF2; the interaction acetylates IRF2 and regulates its activity on the H4 promoter. Interacts (via N-terminus) with SS18L1/CREST (via C-terminus). Interacts with IRF3 (when phosphorylated); forming the dsRNA-activated factor 1 (DRAF1), a complex which activates the transcription of the type I interferon genes. Interacts with MECOM. Interacts with CITED1 (via C-terminus) Interacts with GATA1; the interaction results in acetylation and enhancement of transcriptional activity of GATA1. Interacts with FOXO1; the interaction acetylates FOXO1 and inhibits its transcriptional activity. Interacts with NPAS2, CLOCK and BMAL1. Interacts with ASF1A and ASF1B; this promotes histone acetylation. Interacts with acetylated TP53/p53 and with the acetylated histones H3 and H4. Interacts (via transactivation domain and C-terminus) with PCNA; the interaction occurs on chromatin in UV-irradiated damaged cells. Interacts with DHX9 (via N-terminus); this interaction mediates association with RNA polymerase II holoenzyme and stimulates CREB-dependent transcriptional activation. Interacts with SMAD4; negatively regulated by ZBTB7A. Forms a complex with KMT2A and CREB1. Interacts with DDX3X; this interaction may facilitate HNF4A acetylation. Interacts with MSX1; the interaction may inhibit MSX1 autoinactivation. Interacts with MSX3. Interacts with ACSS2. Post-translationally, methylation of the KIX domain by CARM1 blocks association with CREB. This results in the blockade of CREB signaling, and in activation of apoptotic response. Phosphorylated by CHUK/IKKA at Ser-1383 and Ser-1387; these phosphorylations promote cell growth by switching the binding preference of CREBBP from TP53 to NF-kappa-B. In terms of processing, sumoylation negatively regulates transcriptional activity via the recruitment of DAAX. Post-translationally, autoacetylation is required for binding to protein substrates, such as acetylated histones and acetylated TP53/p53. Autoacetylation is induced by glucose and fatty acids. As to expression, expressed in hypothalamus and cortex.

Its subcellular location is the cytoplasm. It localises to the nucleus. It carries out the reaction L-lysyl-[histone] + acetyl-CoA = N(6)-acetyl-L-lysyl-[histone] + CoA + H(+). The catalysed reaction is L-lysyl-[protein] + acetyl-CoA = N(6)-acetyl-L-lysyl-[protein] + CoA + H(+). It catalyses the reaction (S)-lactoyl-CoA + L-lysyl-[protein] = N(6)-[(S)-lactoyl]-L-lysyl-[protein] + CoA + H(+). In terms of biological role, acetylates histones, giving a specific tag for transcriptional activation. Mediates acetylation of histone H3 at 'Lys-18' and 'Lys-27' (H3K18ac and H3K27ac, respectively). Also acetylates non-histone proteins, like DDX21, FBL, IRF2, MAFG, NCOA3, POLR1E/PAF53 and FOXO1. Binds specifically to phosphorylated CREB and enhances its transcriptional activity toward cAMP-responsive genes. Acts as a coactivator of ALX1. Acts as a circadian transcriptional coactivator which enhances the activity of the circadian transcriptional activators: NPAS2-BMAL1 and CLOCK-BMAL1 heterodimers. Acetylates PCNA; acetylation promotes removal of chromatin-bound PCNA and its degradation during nucleotide excision repair (NER). Acetylates POLR1E/PAF53, leading to decreased association of RNA polymerase I with the rDNA promoter region and coding region. Acetylates DDX21, thereby inhibiting DDX21 helicase activity. Acetylates FBL, preventing methylation of 'Gln-105' of histone H2A (H2AQ104me). In addition to protein acetyltransferase, can use different acyl-CoA substrates, such as lactoyl-CoA, and is able to mediate protein lactylation. Catalyzes lactylation of MRE11 in response to DNA damage, thereby promoting DNA double-strand breaks (DSBs) via homologous recombination (HR). Functions as a transcriptional coactivator for SMAD4 in the TGF-beta signaling pathway. The sequence is that of Histone lysine acetyltransferase CREBBP (Crebbp) from Rattus norvegicus (Rat).